Here is a 146-residue protein sequence, read N- to C-terminus: Transcriptional regulator MraZ (146 aa).

SpoVT-AbrB domains lie at 4–46 (TVFR…SQTE) and 75–118 (TVKV…PEQR).

It belongs to the MraZ family. In terms of assembly, forms oligomers.

The protein localises to the cytoplasm. Its subcellular location is the nucleoid. The sequence is that of Transcriptional regulator MraZ from Mesomycoplasma hyopneumoniae (strain 232) (Mycoplasma hyopneumoniae).